The sequence spans 364 residues: Dihydroorotate dehydrogenase (quinone) (364 aa).

FMN contacts are provided by residues A61–K65 and T85. K65 provides a ligand contact to substrate. N110–F114 lines the substrate pocket. FMN contacts are provided by N139 and N170. N170 serves as a coordination point for substrate. Residue S173 is the Nucleophile of the active site. A substrate-binding site is contributed by N175. FMN is bound by residues K215 and S243. A substrate-binding site is contributed by N244 to T245. FMN is bound by residues G266, G295, and Y316–T317.

It belongs to the dihydroorotate dehydrogenase family. Type 2 subfamily. As to quaternary structure, monomer. Requires FMN as cofactor.

Its subcellular location is the cell membrane. The enzyme catalyses (S)-dihydroorotate + a quinone = orotate + a quinol. The protein operates within pyrimidine metabolism; UMP biosynthesis via de novo pathway; orotate from (S)-dihydroorotate (quinone route): step 1/1. Its function is as follows. Catalyzes the conversion of dihydroorotate to orotate with quinone as electron acceptor. This Brucella canis (strain ATCC 23365 / NCTC 10854 / RM-666) protein is Dihydroorotate dehydrogenase (quinone).